The primary structure comprises 773 residues: ATP-dependent zinc metalloprotease YME1L1 (773 aa).

The Mitochondrial matrix portion of the chain corresponds to 1–295 (MFSLSSTVQP…TNDSLRRTRL (295 aa)). Residues 296 to 316 (ILFVLLLFGIYGLLKNPFLSV) form a helical membrane-spanning segment. Topologically, residues 317 to 773 (RFRTTTGLDS…VLEGKKLEVR (457 aa)) are mitochondrial intermembrane. Positions 341, 383, 384, 385, 386, and 387 each coordinate ATP. His-599 contributes to the Zn(2+) binding site. Glu-600 is an active-site residue. Residues His-603 and Asp-677 each contribute to the Zn(2+) site.

This sequence in the N-terminal section; belongs to the AAA ATPase family. It in the C-terminal section; belongs to the peptidase M41 family. As to quaternary structure, homohexamer; may also form heterohexamers. Exists in several complexes of 600-1100 kDa. Interacts with AFG1L. Zn(2+) is required as a cofactor. In terms of processing, proteolytically processed by mitochondrial processing peptidase (MPP) to generate the mature form. Degraded in an OMA1-dependent manner in response to oxidative stress. In terms of tissue distribution, high expression in cardiac and skeletal muscle mitochondria.

The protein localises to the mitochondrion inner membrane. It is found in the mitochondrion. It catalyses the reaction ATP + H2O = ADP + phosphate + H(+). Functionally, ATP-dependent metalloprotease that catalyzes the degradation of folded and unfolded proteins with a suitable degron sequence in the mitochondrial intermembrane region. Plays an important role in regulating mitochondrial morphology and function by cleaving OPA1 at position S2, giving rise to a form of OPA1 that promotes maintenance of normal mitochondrial structure and mitochondrial protein metabolism. Ensures cell proliferation, maintains normal cristae morphology and complex I respiration activity, promotes antiapoptotic activity and protects mitochondria from the accumulation of oxidatively damaged membrane proteins. Required to control the accumulation of nonassembled respiratory chain subunits (NDUFB6, OX4 and ND1). Involved in the mitochondrial adaptation in response to various signals, such as stress or developmental cues, by mediating degradation of mitochondrial proteins to rewire the mitochondrial proteome. Catalyzes degradation of mitochondrial proteins, such as translocases, lipid transfer proteins and metabolic enzymes in response to nutrient starvation in order to limit mitochondrial biogenesis: mechanistically, YME1L is activated by decreased phosphatidylethanolamine levels caused by LPIN1 activity in response to mTORC1 inhibition. Acts as a regulator of adult neural stem cell self-renewal by promoting mitochondrial proteome rewiring, preserving neural stem and progenitor cells self-renewal. Required for normal, constitutive degradation of PRELID1. Catalyzes the degradation of OMA1 in response to membrane depolarization. Mediates degradation of TIMM17A downstream of the integrated stress response (ISR). Catalyzes degradation of MICU1 when MICU1 is not assembled via an interchain disulfide. This Homo sapiens (Human) protein is ATP-dependent zinc metalloprotease YME1L1 (YME1L1).